The sequence spans 1155 residues: DNA-directed RNA polymerase subunit beta (1155 aa).

This sequence belongs to the RNA polymerase beta chain family. In terms of assembly, the RNAP catalytic core consists of 2 alpha, 1 beta, 1 beta' and 1 omega subunit. When a sigma factor is associated with the core the holoenzyme is formed, which can initiate transcription.

The catalysed reaction is RNA(n) + a ribonucleoside 5'-triphosphate = RNA(n+1) + diphosphate. In terms of biological role, DNA-dependent RNA polymerase catalyzes the transcription of DNA into RNA using the four ribonucleoside triphosphates as substrates. This Thermobifida fusca (strain YX) protein is DNA-directed RNA polymerase subunit beta.